We begin with the raw amino-acid sequence, 263 residues long: 4-hydroxy-tetrahydrodipicolinate reductase (263 aa).

Position 10–15 (10–15 (GASGKM)) interacts with NAD(+). Residue Arg-38 participates in NADP(+) binding. NAD(+) contacts are provided by residues 97–99 (GTT) and 123–126 (APNF). The active-site Proton donor/acceptor is His-153. Position 154 (His-154) interacts with (S)-2,3,4,5-tetrahydrodipicolinate. The active-site Proton donor is Lys-157. 163-164 (GT) is a binding site for (S)-2,3,4,5-tetrahydrodipicolinate.

Belongs to the DapB family.

The protein resides in the cytoplasm. The catalysed reaction is (S)-2,3,4,5-tetrahydrodipicolinate + NAD(+) + H2O = (2S,4S)-4-hydroxy-2,3,4,5-tetrahydrodipicolinate + NADH + H(+). It catalyses the reaction (S)-2,3,4,5-tetrahydrodipicolinate + NADP(+) + H2O = (2S,4S)-4-hydroxy-2,3,4,5-tetrahydrodipicolinate + NADPH + H(+). Its pathway is amino-acid biosynthesis; L-lysine biosynthesis via DAP pathway; (S)-tetrahydrodipicolinate from L-aspartate: step 4/4. In terms of biological role, catalyzes the conversion of 4-hydroxy-tetrahydrodipicolinate (HTPA) to tetrahydrodipicolinate. In Dehalococcoides mccartyi (strain CBDB1), this protein is 4-hydroxy-tetrahydrodipicolinate reductase.